The following is a 616-amino-acid chain: Homeodomain-interacting protein kinase 4 (616 aa).

One can recognise a Protein kinase domain in the interval 11–347; sequence YDIIEVLGKG…PSAALRHPFV (337 aa). Residues 17–25 and K40 each bind ATP; that span reads LGKGTFGEV. D136 functions as the Proton acceptor in the catalytic mechanism. The segment at 485 to 616 is disordered; it reads RHKARKPPAG…SFLQHVTGHH (132 aa). Residues 496–511 are compositionally biased toward polar residues; it reads KSDSNLSNLIRLSQVS. S511 carries the post-translational modification Phosphoserine.

The protein belongs to the protein kinase superfamily. CMGC Ser/Thr protein kinase family. HIPK subfamily. Autophosphorylated.

Its subcellular location is the cytoplasm. It carries out the reaction L-seryl-[protein] + ATP = O-phospho-L-seryl-[protein] + ADP + H(+). The enzyme catalyses L-threonyl-[protein] + ATP = O-phospho-L-threonyl-[protein] + ADP + H(+). Functionally, protein kinase that phosphorylates TP53, and thus induces TP53 repression of BIRC5 promoter. May act as a corepressor of transcription factors (Potential). This is Homeodomain-interacting protein kinase 4 (HIPK4) from Macaca fascicularis (Crab-eating macaque).